The following is a 459-amino-acid chain: Cysteine--tRNA ligase (459 aa).

Cys28 lines the Zn(2+) pocket. A 'HIGH' region motif is present at residues 30 to 40 (VTVYDLCHFGH). 3 residues coordinate Zn(2+): Cys209, His234, and Glu238. The 'KMSKS' region signature appears at 266–270 (KMSKS). Lys269 contributes to the ATP binding site.

It belongs to the class-I aminoacyl-tRNA synthetase family. As to quaternary structure, monomer. It depends on Zn(2+) as a cofactor.

It localises to the cytoplasm. It carries out the reaction tRNA(Cys) + L-cysteine + ATP = L-cysteinyl-tRNA(Cys) + AMP + diphosphate. The sequence is that of Cysteine--tRNA ligase from Actinobacillus pleuropneumoniae serotype 3 (strain JL03).